The chain runs to 281 residues: Arylamine N-acetyltransferase (281 aa).

Catalysis depends on Cys69, which acts as the Acyl-thioester intermediate. Catalysis depends on residues His107 and Asp122. Residues Lys214 and Lys281 each carry the N6-acetyllysine modification.

It belongs to the arylamine N-acetyltransferase family. In terms of assembly, homodimer. Post-translationally, acetylated on Lys-214 and Lys-281. Deacetylated by CobB.

The protein localises to the cytoplasm. It carries out the reaction an arylamine + acetyl-CoA = an N-acetylarylamine + CoA. It catalyses the reaction an N-hydroxyarylamine + acetyl-CoA = an N-acetoxyarylamine + CoA. With respect to regulation, inhibited by salicylic acid, acetylsalicylic acid, 2,6-dichrolo-4-nitrophenol, N-ethylmaleimide and iodoacetamide. Catalyzes the acetyl-CoA-dependent N-acetylation of aromatic amines, and, probably, the O-acetylation of N-hydroxyarylamines. In vitro, catalyzes the N-acetylation of various arylamines such as aminobenzoic acid, aminophenol, aminotoluene, phenetidine, anisidine, aniline, isoniazid and 2-amino-fluorene. N-hydroxyarylamine O-acetyltransferase activity has not been assayed directly, however, NhoA activity is required for the mutagenicity of nitroaromatic compounds, suggesting that it also has O-acetyltransferase activity. The sequence is that of Arylamine N-acetyltransferase (nhoA) from Escherichia coli (strain K12).